The primary structure comprises 582 residues: NudC domain-containing protein 1 (582 aa).

Ser-7 bears the Phosphoserine mark. Positions 272 to 360 (KVEPLYYWQQ…NEGLMWPELV (89 aa)) constitute a CS domain. Ser-387 is modified (phosphoserine).

It localises to the cytoplasm. The protein localises to the nucleus. This chain is NudC domain-containing protein 1, found in Mus musculus (Mouse).